We begin with the raw amino-acid sequence, 203 residues long: Dephospho-CoA kinase (203 aa).

The DPCK domain occupies Ile-6–Ala-203. An ATP-binding site is contributed by Gly-14–Ala-19.

The protein belongs to the CoaE family.

It localises to the cytoplasm. The catalysed reaction is 3'-dephospho-CoA + ATP = ADP + CoA + H(+). It functions in the pathway cofactor biosynthesis; coenzyme A biosynthesis; CoA from (R)-pantothenate: step 5/5. Functionally, catalyzes the phosphorylation of the 3'-hydroxyl group of dephosphocoenzyme A to form coenzyme A. The chain is Dephospho-CoA kinase from Pseudomonas aeruginosa (strain ATCC 15692 / DSM 22644 / CIP 104116 / JCM 14847 / LMG 12228 / 1C / PRS 101 / PAO1).